A 196-amino-acid polypeptide reads, in one-letter code: ATP-dependent Clp protease proteolytic subunit (196 aa).

S96 serves as the catalytic Nucleophile. H121 is a catalytic residue.

It belongs to the peptidase S14 family. In terms of assembly, fourteen ClpP subunits assemble into 2 heptameric rings which stack back to back to give a disk-like structure with a central cavity, resembling the structure of eukaryotic proteasomes.

It localises to the cytoplasm. The catalysed reaction is Hydrolysis of proteins to small peptides in the presence of ATP and magnesium. alpha-casein is the usual test substrate. In the absence of ATP, only oligopeptides shorter than five residues are hydrolyzed (such as succinyl-Leu-Tyr-|-NHMec, and Leu-Tyr-Leu-|-Tyr-Trp, in which cleavage of the -Tyr-|-Leu- and -Tyr-|-Trp bonds also occurs).. Its function is as follows. Cleaves peptides in various proteins in a process that requires ATP hydrolysis. Has a chymotrypsin-like activity. Plays a major role in the degradation of misfolded proteins. In Streptococcus uberis (strain ATCC BAA-854 / 0140J), this protein is ATP-dependent Clp protease proteolytic subunit.